A 1191-amino-acid polypeptide reads, in one-letter code: Protogenin (1191 aa).

A signal peptide spans 1–23; the sequence is MAPPVRPGMLPLLLLLLLPPLGS. 4 consecutive Ig-like domains span residues 24–124, 126–216, 229–316, and 321–405; these read VPGV…AHLT, STIS…ASLT, PTII…ATLT, and PSFV…ARLT. The Extracellular portion of the chain corresponds to 24 to 943; the sequence is VPGVWSFSEL…YYHLDQKSMT (920 aa). Intrachain disulfides connect Cys-54/Cys-107 and Cys-150/Cys-199. Residue Asn-237 is glycosylated (N-linked (GlcNAc...) asparagine). 2 cysteine pairs are disulfide-bonded: Cys-250-Cys-298 and Cys-342-Cys-389. Fibronectin type-III domains lie at 415 to 509, 511 to 607, 612 to 711, 718 to 811, and 816 to 911; these read APYN…TLED, PLRP…TPKA, APKS…VRDR, PPHH…TLPE, and PPVG…VLPK. The N-linked (GlcNAc...) asparagine glycan is linked to Asn-624. Residues 944–964 form a helical membrane-spanning segment; sequence GIAVGVGIALTCILICVLILI. Topologically, residues 965-1191 are cytoplasmic; that stretch reads YRSKARKSSA…LRYAAEGFPV (227 aa). 2 disordered regions span residues 975-1010 and 1079-1191; these read SKTA…ETAE and ISDE…GFPV. The span at 977–990 shows a compositional bias: polar residues; sequence TAQSGTQPLSQASA. Basic and acidic residues predominate over residues 1104 to 1132; sequence DTEHSANSEGSHETGDSGRFSHESNDEIH. 2 stretches are compositionally biased toward polar residues: residues 1135–1146 and 1171–1180; these read SVISSTPPTSNP and EQTSAPQTSA.

It belongs to the immunoglobulin superfamily. DCC family. From mid-gastrulation to early somite stages, restricted to posterior neural plate and mesoderm with an anterior limit at the level of the rhombencephalon. Posterior restriction is progressively lost during somitogenesis. Expression is maintained in the neural tube and paraxial mesoderm during this process. As development proceeds, further restricted to the dorsal parts of the spinal cord and somites. In parallel, expression progresses caudally during axis elongation.

The protein resides in the membrane. Functionally, may play a role in anteroposterior axis elongation. The polypeptide is Protogenin (Mus musculus (Mouse)).